We begin with the raw amino-acid sequence, 314 residues long: Dihydroorotate dehydrogenase (fumarate) (314 aa).

Substrate-binding positions include Lys46, 70–74, and Asn130; that span reads NSMGL. 46–47 contributes to the FMN binding site; sequence KS. Position 130 (Asn130) interacts with FMN. Residues Ser132 and Cys133 each act as nucleophile in the active site. Residues Lys167 and Ile195 each coordinate FMN. Position 196-197 (196-197) interacts with substrate; sequence NS. FMN-binding positions include Gly224, 252 to 253, and 274 to 275; these read GG and GT.

This sequence belongs to the dihydroorotate dehydrogenase family. Type 1 subfamily. In terms of assembly, homodimer. FMN is required as a cofactor.

It localises to the cytoplasm. The enzyme catalyses (S)-dihydroorotate + fumarate = orotate + succinate. It functions in the pathway pyrimidine metabolism; UMP biosynthesis via de novo pathway. Catalyzes the conversion of dihydroorotate to orotate with fumarate as the electron acceptor. This Saccharomyces bayanus (Yeast) protein is Dihydroorotate dehydrogenase (fumarate) (URA1).